Here is a 1052-residue protein sequence, read N- to C-terminus: MKLVSTWLLVLVVLLCGKRHLGDRLGTRALEKAPCPSCSHLTLKVEFSSTVVEYEYIVAFNGYFTAKARNSFISSALKSSEVENWRIIPRNNPSSDYPSDFEVIQIKEKQKAGLLTLEDHPNIKRVTPQRKVFRSLKFAESNPIVPCNETRWSQKWQSSRPLKRASLSLGSGFWHATGRHSSRRLLRAIPRQVAQTLQADVLWQMGYTGANVRVAVFDTGLSEKHPHFKNVKERTNWTNERTLDDGLGHGTFVAGVIASMRECQGFAPDAELHIFRVFTNNQVSYTSWFLDAFNYAILKKMDVLNLSIGGPDFMDHPFVDKVWELTANNVIMVSAIGNDGPLYGTLNNPADQMDVIGVGGIDFEDNIARFSSRGMTTWELPGGYGRVKPDIVTYGAGVRGSGVKGGCRALSGTSVASPVVAGAVTLLVSTVQKRELVNPASVKQALIASARRLPGVNMFEQGHGKLDLLRAYQILSSYKPQASLSPSYIDLTECPYMWPYCSQPIYYGGMPTIVNVTILNGMGVTGRIVDKPEWRPYLPQNGDNIEVAFSYSSVLWPWSGYLAISISVTKKAASWEGIAQGHIMITVASPAETELHSGAEHTSTVKLPIKVKIIPTPPRSKRVLWDQYHNLRYPPGYFPRDNLRMKNDPLDWNGDHVHTNFRDMYQHLRSMGYFVEVLGAPFTCFDATQYGTLLLVDSEEEYFPEEIAKLRRDVDNGLSLVIFSDWYNTSVMRKVKFYDENTRQWWMPDTGGANIPALNELLSVWNMGFSDGLYEGEFVLANHDMYYASGCSIAKFPEDGVVITQTFKDQGLEVLKQETAVVENVPILGLYQIPSEGGGRIVLYGDSNCLDDSHRQKDCFWLLDALLQYTSYGVTPPSLSHSGNRQRPPSGAGLAPPERMEGNHLHRYSKVLEAHLGDPKPRPLPACPHLSWAKPQPLNETAPSNLWKHQKLLSIDLDKVVLPNFRSNRPQVRPLSPGESGAWDIPGGIMPGRYNQEVGQTIPVFAFLGAMVALAFFVVQISKAKSRPKRRRPRAKRPQLAQQAHPARTPSV.

Residues 1-17 (MKLVSTWLLVLVVLLCG) form the signal peptide. Residues 18 to 186 (KRHLGDRLGT…TGRHSSRRLL (169 aa)) constitute a propeptide that is removed on maturation. A glycan (N-linked (GlcNAc...) asparagine) is linked at asparagine 148. The residue at position 168 (serine 168) is a Phosphoserine. Residues 187–999 (RAIPRQVAQT…MPGRYNQEVG (813 aa)) lie on the Lumenal side of the membrane. One can recognise a Peptidase S8 domain in the interval 190 to 472 (PRQVAQTLQA…HGKLDLLRAY (283 aa)). Aspartate 218 (charge relay system) is an active-site residue. N-linked (GlcNAc...) asparagine glycosylation occurs at asparagine 236. Histidine 249 acts as the Charge relay system in catalysis. A glycan (N-linked (GlcNAc...) asparagine) is linked at asparagine 305. Residue serine 414 is the Charge relay system of the active site. 2 N-linked (GlcNAc...) asparagine glycosylation sites follow: asparagine 515 and asparagine 728. Positions 877 to 887 (PSLSHSGNRQR) are enriched in polar residues. The segment at 877-900 (PSLSHSGNRQRPPSGAGLAPPERM) is disordered. Asparagine 939 is a glycosylation site (N-linked (GlcNAc...) asparagine). The helical transmembrane segment at 1000–1022 (QTIPVFAFLGAMVALAFFVVQIS) threads the bilayer. The Cytoplasmic segment spans residues 1023-1052 (KAKSRPKRRRPRAKRPQLAQQAHPARTPSV). Basic residues predominate over residues 1026–1037 (SRPKRRRPRAKR). A disordered region spans residues 1026–1052 (SRPKRRRPRAKRPQLAQQAHPARTPSV).

It belongs to the peptidase S8 family. In terms of assembly, interacts with LYSET; this interaction bridges GNPTAB to MBTPS1. The cofactor is Ca(2+). In terms of processing, the 148 kDa zymogen is processed progressively into two membrane-bound 120 and 106 kDa forms in the endoplasmic reticulum, and late into a secreted 98 kDa form. The propeptide is autocatalytically removed through an intramolecular cleavage after Leu-186. Further cleavage generates 14, 10, and 8 kDa intermediates.

It localises to the endoplasmic reticulum membrane. It is found in the golgi apparatus membrane. It carries out the reaction Processes precursors containing basic and hydrophobic/aliphatic residues at P4 and P2, respectively, with a relatively relaxed acceptance of amino acids at P1 and P3.. Inhibited by divalent copper and zinc ions, but not by nickel or cobalt. Inhibited by its prosegment, but not smaller fragments. Inhibited by 4-(2-aminoethyl)benzenesulfonyl fluoride (AEBSF), a serine protease inhibitor. Its function is as follows. Serine protease that cleaves after hydrophobic or small residues, provided that Arg or Lys is in position P4: known substrates include SREBF1/SREBP1, SREBF2/SREBP2, BDNF, GNPTAB, ATF6, ATF6B and FAM20C. Cleaves substrates after Arg-Ser-Val-Leu (SREBP2), Arg-His-Leu-Leu (ATF6), Arg-Gly-Leu-Thr (BDNF) and its own propeptide after Arg-Arg-Leu-Leu. Catalyzes the first step regulated intramembrane proteolysis activation of the sterol regulatory element-binding proteins (SREBPs) SREBF1/SREBP1 and SREBF2/SREBP2. Also mediates the first step of the regulated intramembrane proteolytic activation of the cyclic AMP-dependent transcription factor ATF-6 (ATF6 and ATF6B). Mediates the protein cleavage of GNPTAB into subunit alpha and beta, thereby participating in biogenesis of lysosomes. Cleaves the propeptide from FAM20C which is required for FAM20C secretion from the Golgi apparatus membrane and for enhancement of FAM20C kinase activity, promoting osteoblast differentiation and biomineralization. Involved in the regulation of M6P-dependent Golgi-to-lysosome trafficking of lysosomal enzymes. It is required for the activation of CREB3L2/BBF2H7, a transcriptional activator of MIA3/TANGO and other genes controlling mega vesicle formation. Therefore, it plays a key role in the regulation of mega vesicle-mediated collagen trafficking. In astrocytes and osteoblasts, upon DNA damage and ER stress, mediates the first step of the regulated intramembrane proteolytic activation of the transcription factor CREB3L1, leading to the inhibition of cell-cycle progression. The chain is Membrane-bound transcription factor site-1 protease (Mbtps1) from Mus musculus (Mouse).